The primary structure comprises 105 residues: Malonate decarboxylase acyl carrier protein (105 aa).

An O-(phosphoribosyl dephospho-coenzyme A)serine modification is found at S28.

The protein belongs to the MdcC family. Covalently binds the prosthetic group of malonate decarboxylase.

The protein localises to the cytoplasm. Functionally, subunit of malonate decarboxylase, it is an acyl carrier protein to which acetyl and malonyl thioester residues are bound via a 2'-(5''-phosphoribosyl)-3'-dephospho-CoA prosthetic group and turn over during the catalytic mechanism. In Xanthomonas axonopodis pv. citri (strain 306), this protein is Malonate decarboxylase acyl carrier protein.